The following is a 333-amino-acid chain: Cathepsin M (333 aa).

The signal sequence occupies residues 1–15 (MTSAIFLAMLCLGMA). Residues 16-113 (LPSPAPDPIL…KSVQKRLSVN (98 aa)) constitute a propeptide, activation peptide. Cystine bridges form between cysteine 135–cysteine 178 and cysteine 169–cysteine 211. Cysteine 138 is a catalytic residue. N-linked (GlcNAc...) asparagine glycosylation is found at asparagine 217, asparagine 221, and asparagine 268. Cysteine 269 and cysteine 322 are joined by a disulfide. Residues histidine 276 and asparagine 300 contribute to the active site.

Belongs to the peptidase C1 family. Placenta.

Its subcellular location is the lysosome. This Mus musculus (Mouse) protein is Cathepsin M (Ctsm).